Reading from the N-terminus, the 419-residue chain is Creatine kinase S-type, mitochondrial (419 aa).

The transit peptide at methionine 1–alanine 39 directs the protein to the mitochondrion. A cardiolipin-binding region spans residues aspartate 40 to methionine 64. One can recognise a Phosphagen kinase N-terminal domain in the interval lysine 46–asparagine 132. Residues tyrosine 159–leucine 401 form the Phosphagen kinase C-terminal domain. ATP-binding positions include serine 162–arginine 166 and histidine 225. Tyrosine 255 bears the Phosphotyrosine mark. Residues arginine 270, arginine 326, arginine 354–valine 359, and aspartate 369 contribute to the ATP site. Threonine 356 carries the phosphothreonine modification.

This sequence belongs to the ATP:guanido phosphotransferase family. As to quaternary structure, exists as an octamer composed of four CKMT2 homodimers.

The protein localises to the mitochondrion inner membrane. It carries out the reaction creatine + ATP = N-phosphocreatine + ADP + H(+). In terms of biological role, reversibly catalyzes the transfer of phosphate between ATP and various phosphogens (e.g. creatine phosphate). Creatine kinase isoenzymes play a central role in energy transduction in tissues with large, fluctuating energy demands, such as skeletal muscle, heart, brain and spermatozoa. This chain is Creatine kinase S-type, mitochondrial (Ckmt2), found in Mus musculus (Mouse).